A 255-amino-acid polypeptide reads, in one-letter code: Folate receptor beta (255 aa).

The signal sequence occupies residues 1-16 (MVWKWMPLLLLLVCVA). Cystine bridges form between C31/C59, C51/C99, C60/C103, C83/C169, C90/C140, C129/C203, C133/C183, and C146/C163. Residues D97 and Y101 each coordinate folate. N115 carries an N-linked (GlcNAc...) asparagine glycan. Residues 118-122 (WRKER), 151-156 (HRGWDW), and S190 contribute to the folate site. The N-linked (GlcNAc...) asparagine glycan is linked to N195. The GPI-anchor amidated asparagine moiety is linked to residue N230. The propeptide at 231–255 (AGEMLHGTGGLLLSLALMLQLWLLG) is removed in mature form.

Belongs to the folate receptor family. In terms of processing, N-glycosylated. In terms of tissue distribution, expressed in placenta and hematopoietic cells. Expression is increased in malignant tissues.

It is found in the cell membrane. The protein resides in the secreted. Functionally, binds to folate and reduced folic acid derivatives and mediates delivery of 5-methyltetrahydrofolate and folate analogs into the interior of cells. Has high affinity for folate and folic acid analogs at neutral pH. Exposure to slightly acidic pH after receptor endocytosis triggers a conformation change that strongly reduces its affinity for folates and mediates their release. The chain is Folate receptor beta (FOLR2) from Homo sapiens (Human).